The following is a 172-amino-acid chain: Bone marrow stromal antigen 2 (172 aa).

Residues 1–26 lie on the Cytoplasmic side of the membrane; it reads MAPSFYHYLPVAMDERWEPKGWSIRR. Lysine 20 participates in a covalent cross-link: Glycyl lysine isopeptide (Lys-Gly) (interchain with G-Cter in ubiquitin). A helical; Signal-anchor for type II membrane protein transmembrane segment spans residues 27-47; sequence WWLVAAILVVLIGVVLVCLIV. Over 48-152 the chain is Extracellular; that stretch reads YFANAAHSEA…EISTTVQVNS (105 aa). N-linked (GlcNAc...) asparagine glycans are attached at residues asparagine 70 and asparagine 97. The stretch at 103 to 149 forms a coiled coil; it reads LRDSLKKKVSQTQEQQARIKELENKIERLNQELENLRTQKEISTTVQ. Residue serine 152 is the site of GPI-anchor amidated serine attachment. The propeptide at 153 to 172 is removed in mature form; sequence GGSVVVSSLLVLVAVLFLHF.

In terms of assembly, parallel homodimer; disulfide-linked. May form homotetramers under reducing conditions. Isoform 1 and isoform 2 form homodimers and also heterodimers with each other. Dimerization is essential for its antiviral activity. Interacts (via cytoplasmic domain) with ARHGAP44. Interacts with MMP14 (via C-terminal cytoplasmic tail). Interacts with LILRA4/ILT7. Interacts with RNF115. Post-translationally, N-glycosylated. In terms of processing, the GPI anchor is essential for its antiviral activity. Ubiquitously expressed, with highest levels in brain and liver. Present in liver (at protein level).

The protein resides in the golgi apparatus. It localises to the trans-Golgi network. The protein localises to the cell membrane. Its subcellular location is the late endosome. It is found in the membrane raft. The protein resides in the cytoplasm. It localises to the apical cell membrane. IFN-induced antiviral host restriction factor which efficiently blocks the release of diverse mammalian enveloped viruses by directly tethering nascent virions to the membranes of infected cells. Acts as a direct physical tether, holding virions to the cell membrane and linking virions to each other. The tethered virions can be internalized by endocytosis and subsequently degraded or they can remain on the cell surface. In either case, their spread as cell-free virions is restricted. Its target viruses belong to diverse families, including retroviridae: human immunodeficiency virus type 1 (HIV-1), mouse mammary tumor virus (MMTV) and murine leukemia virus (MLV), filoviridae: ebola virus (EBOV), arenaviridae: lassa virus (LASV), and rhabdoviridae: vesicular stomatitis virus (VSV). Can inhibit cell surface proteolytic activity of MMP14 causing decreased activation of MMP15 which results in inhibition of cell growth and migration. Can stimulate signaling by LILRA4/ILT7 and consequently provide negative feedback to the production of IFN by plasmacytoid dendritic cells in response to viral infection. Plays a role in the organization of the subapical actin cytoskeleton in polarized epithelial cells. The polypeptide is Bone marrow stromal antigen 2 (Bst2) (Rattus norvegicus (Rat)).